A 421-amino-acid polypeptide reads, in one-letter code: Serine--tRNA ligase (421 aa).

229–231 (TSE) is an L-serine binding site. 260–262 (RRE) lines the ATP pocket. L-serine is bound at residue glutamate 283. Residue 347–350 (EISS) participates in ATP binding. Residue serine 381 coordinates L-serine.

It belongs to the class-II aminoacyl-tRNA synthetase family. Type-1 seryl-tRNA synthetase subfamily. As to quaternary structure, homodimer. The tRNA molecule binds across the dimer.

Its subcellular location is the cytoplasm. The catalysed reaction is tRNA(Ser) + L-serine + ATP = L-seryl-tRNA(Ser) + AMP + diphosphate + H(+). It carries out the reaction tRNA(Sec) + L-serine + ATP = L-seryl-tRNA(Sec) + AMP + diphosphate + H(+). The protein operates within aminoacyl-tRNA biosynthesis; selenocysteinyl-tRNA(Sec) biosynthesis; L-seryl-tRNA(Sec) from L-serine and tRNA(Sec): step 1/1. Catalyzes the attachment of serine to tRNA(Ser). Is also able to aminoacylate tRNA(Sec) with serine, to form the misacylated tRNA L-seryl-tRNA(Sec), which will be further converted into selenocysteinyl-tRNA(Sec). In Fusobacterium nucleatum subsp. nucleatum (strain ATCC 25586 / DSM 15643 / BCRC 10681 / CIP 101130 / JCM 8532 / KCTC 2640 / LMG 13131 / VPI 4355), this protein is Serine--tRNA ligase.